The primary structure comprises 173 residues: Putative metal-dependent hydrolase BCE33L2441 (173 aa).

The Zn(2+) site is built by His65, His156, and His160.

This sequence belongs to the metal hydrolase YfiT family. Homodimer. Zn(2+) serves as cofactor.

It is found in the cytoplasm. Its function is as follows. Possible metal-dependent hydrolase. This Bacillus cereus (strain ZK / E33L) protein is Putative metal-dependent hydrolase BCE33L2441.